A 713-amino-acid polypeptide reads, in one-letter code: MQPRTPLVLCVLLSQVLLLTSAEDLDCIPGFQQKVFHINQPAEFIEDQSILNLTFSDCKGNDKLRYEVSSPYFKVNSDGGLVALRNITAVGKTLFVHARTPHAEDMAELVIVGGKDIQGSLQDIFKFARTSPVPRQKRSIVVSPILIPENQRQPFPRDVGKVVDSDRPERSKFRLTGKGVDQEPKGIFRINENTGSVSVTRTLDREVIAVYQLFVETTDVNGKTLEGPVPLEVIVIDQNDNRPIFREGPYIGHVMEGSPTGTTVMRMTAFDADDPATDNALLRYNIRQQTPDKPSPNMFYIDPEKGDIVTVVSPALLDRETLENPKYELIIEAQDMAGLDVGLTGTATATIMIDDKNDHSPKFTKKEFQATVEEGAVGVIVNLTVEDKDDPTTGAWRAAYTIINGNPGQSFEIHTNPQTNEGMLSVVKPLGYEISAFHTLLIKVENEDPLVPDVSYGPSSTATVHITVLDVNEGPVFYPDPMMVTRQENISVGSVLLTVNATDPDSLQHQTIRYSVYKDPAGWLNINPINGTVDTTAVLDRESPFVDNSVYTALFLAIDSGNPPATGTGTLLITLEDVNDNAPFIYPTVAEVCDDAKNLSVVILGASDKDLHPNTDPFKFEIHKQAVPDKVWKISKINNTHALVSLLQNLNKANYNLPIMVTDSGKPPMTNITDLRVQVCSCRNSKVDSNAVGALRFSLPSLLLLSLFSLACL.

Positions 1 to 22 are cleaved as a signal peptide; sequence MQPRTPLVLCVLLSQVLLLTSA. The propeptide occupies 23–138; it reads EDLDCIPGFQ…RTSPVPRQKR (116 aa). N-linked (GlcNAc...) asparagine glycans are attached at residues Asn-52 and Asn-86. 5 consecutive Cadherin domains span residues 139 to 245, 246 to 363, 364 to 477, 478 to 585, and 584 to 690; these read SIVV…RPIF, REGP…SPKF, TKKE…GPVF, YPDP…APFI, and FIYP…VDSN. Residues Asn-382, Asn-489, Asn-500, Asn-530, Asn-598, Asn-638, and Asn-671 are each glycosylated (N-linked (GlcNAc...) asparagine). Asn-690 carries the GPI-anchor amidated asparagine lipid modification. Positions 691-713 are cleaved as a propeptide — removed in mature form; it reads AVGALRFSLPSLLLLSLFSLACL.

In terms of assembly, by contrast to classical cadherins, homodimerization in trans is not mediated by cadherin EC1 domain strand-swapping, but instead through a homophilic adhesive interface which joins two elongated EC1-EC2 domains through a region near their Ca2+-binding sites to form a tetrahedral, X-like shape.

The protein resides in the cell membrane. The protein localises to the cytoplasm. Its function is as follows. Cadherins are calcium-dependent cell adhesion proteins. They preferentially interact with themselves in a homophilic manner in connecting cells; cadherins may thus contribute to the sorting of heterogeneous cell types. May act as a negative regulator of neural cell growth. The protein is Cadherin-13 (CDH13) of Pongo abelii (Sumatran orangutan).